Consider the following 131-residue polypeptide: M-zodatoxin-Lt8o (131 aa).

An N-terminal signal peptide occupies residues 1–20; that stretch reads MKYFVVALALVAAFACIAES. Residues 21–60 constitute a propeptide that is removed on maturation; it reads KPAESEHELAEVEEENELADLEDAVWLEHLADLSDLEEAR.

This sequence belongs to the cationic peptide 06 (cytoinsectotoxin) family. In terms of tissue distribution, expressed by the venom gland.

The protein resides in the secreted. Functionally, insecticidal, cytolytic and antimicrobial peptide. Forms voltage-dependent, ion-permeable channels in membranes. At high concentration causes cell membrane lysis. In Lachesana tarabaevi (Spider), this protein is M-zodatoxin-Lt8o (cit 1-14).